The primary structure comprises 349 residues: Early nodulin-like protein 2 (349 aa).

Residues 1-28 (MTFLKMKSLSFFFTILLSLSTLFTISNA) form the signal peptide. The Phytocyanin domain maps to 29–130 (RKFNVGGSGA…GQKLNVVVIS (102 aa)). A disulfide bridge connects residues Cys84 and Cys118. A disordered region spans residues 136-330 (TAQSPHAAAP…GQKKSSANGM (195 aa)). 2 stretches are compositionally biased toward low complexity: residues 145–201 (PGSS…SPPG) and 224–234 (TSPVSPSSAPM). The span at 249–260 (IPPSSAPMTSPP) shows a compositional bias: polar residues. The segment covering 263-312 (MAPKSSSPVSNSPTVSPSLAPGGSTSSSPSDSPSGSAMGPSGDGPSAAGD) has biased composition (low complexity). The GPI-anchor amidated serine moiety is linked to residue Ser325. A propeptide spans 326–349 (SANGMTVMSITTVLSLVLTIFLSA) (removed in mature form).

The protein belongs to the early nodulin-like (ENODL) family. As to expression, mostly expressed in leaves and roots, and, to a lower extent, in seedlings, stems and flowers, but barely in seeds.

The protein localises to the cell membrane. In terms of biological role, may act as a carbohydrate transporter. The protein is Early nodulin-like protein 2 of Arabidopsis thaliana (Mouse-ear cress).